Reading from the N-terminus, the 207-residue chain is MVIVKKISAIEVLDSRGNPTIKTKVELCDGSIGEAIVPSGASTGKRERLELRDGGEAFGGKGVLKAIKNVNSMIAEEICGKDAYNQKAIDDAMLALDGTDNYSRIGANAVLGVSMAVARAAANSLNIPLYRYLGGANACTLPVPMFNIINGGAHANNSVDFQEFMIMPFGFSKFSNALRAATEVYQTLKKILNDLGHSTAVGDEGGF.

Glutamine 162 is a binding site for (2R)-2-phosphoglycerate. Glutamate 204 functions as the Proton donor in the catalytic mechanism.

This sequence belongs to the enolase family.

Its subcellular location is the cytoplasm. The protein localises to the secreted. The protein resides in the cell surface. It carries out the reaction (2R)-2-phosphoglycerate = phosphoenolpyruvate + H2O. Its pathway is carbohydrate degradation; glycolysis; pyruvate from D-glyceraldehyde 3-phosphate: step 4/5. In terms of biological role, catalyzes the reversible conversion of 2-phosphoglycerate (2-PG) into phosphoenolpyruvate (PEP). It is essential for the degradation of carbohydrates via glycolysis. The sequence is that of Enolase from Campylobacter fetus.